The following is a 64-amino-acid chain: Large ribosomal subunit protein bL35 (64 aa).

Residues 1-15 (MPKNKTHSGTAKRFR) show a composition bias toward basic residues. A disordered region spans residues 1 to 27 (MPKNKTHSGTAKRFRVTGSGKLRREQA).

It belongs to the bacterial ribosomal protein bL35 family.

This Saccharopolyspora erythraea (strain ATCC 11635 / DSM 40517 / JCM 4748 / NBRC 13426 / NCIMB 8594 / NRRL 2338) protein is Large ribosomal subunit protein bL35.